A 344-amino-acid polypeptide reads, in one-letter code: Molybdate/tungstate import ATP-binding protein WtpC (344 aa).

The ABC transporter domain occupies 2-231 (LRVESVSKDY…PVDEGVARFL (230 aa)). An ATP-binding site is contributed by 33–40 (GPSGAGKT). In terms of domain architecture, Mop spans 280 to 344 (KTSARNEFRA…SFKTSAIKVF (65 aa)).

The protein belongs to the ABC transporter superfamily. Sulfate/tungstate importer (TC 3.A.1.6) family. In terms of assembly, the complex is composed of two ATP-binding proteins (WtpC), two transmembrane proteins (WtpB) and a solute-binding protein (WtpA).

It localises to the cell membrane. It catalyses the reaction tungstate(in) + ATP + H2O = tungstate(out) + ADP + phosphate + H(+). In terms of biological role, part of the ABC transporter complex WtpABC involved in molybdate/tungstate import. Responsible for energy coupling to the transport system. In Pyrococcus abyssi (strain GE5 / Orsay), this protein is Molybdate/tungstate import ATP-binding protein WtpC (wtpC).